The chain runs to 144 residues: Large ribosomal subunit protein uL11 (144 aa).

The protein belongs to the universal ribosomal protein uL11 family. In terms of assembly, part of the ribosomal stalk of the 50S ribosomal subunit. Interacts with L10 and the large rRNA to form the base of the stalk. L10 forms an elongated spine to which L12 dimers bind in a sequential fashion forming a multimeric L10(L12)X complex. One or more lysine residues are methylated.

In terms of biological role, forms part of the ribosomal stalk which helps the ribosome interact with GTP-bound translation factors. In Acidiphilium cryptum (strain JF-5), this protein is Large ribosomal subunit protein uL11.